Reading from the N-terminus, the 116-residue chain is Dynein light chain Tctex-type 3 (116 aa).

The residue at position 4 (Tyr4) is a 3'-nitrotyrosine.

It belongs to the dynein light chain Tctex-type family. As to quaternary structure, homodimer. The cytoplasmic dynein 1 complex consists of two catalytic heavy chains (HCs) and a number of non-catalytic subunits presented by intermediate chains (ICs), light intermediate chains (LICs) and light chains (LCs); the composition seems to vary in respect to the IC, LIC and LC composition. The heavy chain homodimer serves as a scaffold for the probable homodimeric assembly of the respective non-catalytic subunits. The ICs and LICs bind directly to the HC dimer and the LCs assemble on the IC dimer. DYNLT1 and DYNLT3 compete for association with dynein IC (DYNC1I1 or DYNC1I2). Self-associates. Interacts with DYNC1I1 and DYNC1I2. Interacts with BUB3. Interacts with SATB1 in nucleus to form complex with matrix attachment regions (MARs) of DNA.

The protein resides in the nucleus. It is found in the cytoplasm. The protein localises to the cytoskeleton. It localises to the chromosome. Its subcellular location is the centromere. The protein resides in the kinetochore. Its function is as follows. Acts as one of several non-catalytic accessory components of the cytoplasmic dynein 1 complex that are thought to be involved in linking dynein to cargos and to adapter proteins that regulate dynein function. Cytoplasmic dynein 1 acts as a motor for the intracellular retrograde motility of vesicles and organelles along microtubules. Probably binds BUB3 as part of transport cargo. Required for the efficient progression through mitosis. This chain is Dynein light chain Tctex-type 3 (DYNLT3), found in Homo sapiens (Human).